Reading from the N-terminus, the 54-residue chain is U-reduvitoxin-Pr7a (54 aa).

The first 23 residues, 1–23, serve as a signal peptide directing secretion; sequence MDFLRILLFVLACIMALFTSAIA. Cystine bridges form between cysteine 26-cysteine 41, cysteine 33-cysteine 46, and cysteine 40-cysteine 53.

It belongs to the venom Ptu1-like knottin family. In terms of tissue distribution, expressed by the venom gland.

It is found in the secreted. Functionally, binds reversibly and blocks P/Q-type voltage-gated calcium channels (Cav). The protein is U-reduvitoxin-Pr7a of Platymeris rhadamanthus (Red spot assassin bug).